The following is a 256-amino-acid chain: Imidazole glycerol phosphate synthase subunit HisF (256 aa).

Catalysis depends on residues Asp-11 and Asp-130.

The protein belongs to the HisA/HisF family. Heterodimer of HisH and HisF.

The protein localises to the cytoplasm. The catalysed reaction is 5-[(5-phospho-1-deoxy-D-ribulos-1-ylimino)methylamino]-1-(5-phospho-beta-D-ribosyl)imidazole-4-carboxamide + L-glutamine = D-erythro-1-(imidazol-4-yl)glycerol 3-phosphate + 5-amino-1-(5-phospho-beta-D-ribosyl)imidazole-4-carboxamide + L-glutamate + H(+). The protein operates within amino-acid biosynthesis; L-histidine biosynthesis; L-histidine from 5-phospho-alpha-D-ribose 1-diphosphate: step 5/9. Functionally, IGPS catalyzes the conversion of PRFAR and glutamine to IGP, AICAR and glutamate. The HisF subunit catalyzes the cyclization activity that produces IGP and AICAR from PRFAR using the ammonia provided by the HisH subunit. The chain is Imidazole glycerol phosphate synthase subunit HisF from Prochlorococcus marinus (strain MIT 9215).